Here is a 278-residue protein sequence, read N- to C-terminus: Dermonecrotic toxin LspiSicTox-betaIE2i (278 aa).

The active site involves His-5. Residues Glu-25 and Asp-27 each contribute to the Mg(2+) site. His-41 serves as the catalytic Nucleophile. Disulfide bonds link Cys-45-Cys-51 and Cys-47-Cys-190. Glu-85 contacts Mg(2+).

Belongs to the arthropod phospholipase D family. Class II subfamily. The cofactor is Mg(2+). Expressed by the venom gland.

The protein localises to the secreted. The catalysed reaction is an N-(acyl)-sphingosylphosphocholine = an N-(acyl)-sphingosyl-1,3-cyclic phosphate + choline. It carries out the reaction an N-(acyl)-sphingosylphosphoethanolamine = an N-(acyl)-sphingosyl-1,3-cyclic phosphate + ethanolamine. It catalyses the reaction a 1-acyl-sn-glycero-3-phosphocholine = a 1-acyl-sn-glycero-2,3-cyclic phosphate + choline. The enzyme catalyses a 1-acyl-sn-glycero-3-phosphoethanolamine = a 1-acyl-sn-glycero-2,3-cyclic phosphate + ethanolamine. Its function is as follows. Dermonecrotic toxins cleave the phosphodiester linkage between the phosphate and headgroup of certain phospholipids (sphingolipid and lysolipid substrates), forming an alcohol (often choline) and a cyclic phosphate. This toxin acts on sphingomyelin (SM). It may also act on ceramide phosphoethanolamine (CPE), lysophosphatidylcholine (LPC) and lysophosphatidylethanolamine (LPE), but not on lysophosphatidylserine (LPS), and lysophosphatidylglycerol (LPG). It acts by transphosphatidylation, releasing exclusively cyclic phosphate products as second products. Induces dermonecrosis, hemolysis, increased vascular permeability, edema, inflammatory response, and platelet aggregation. This Loxosceles spinulosa (Recluse spider) protein is Dermonecrotic toxin LspiSicTox-betaIE2i.